The following is an 846-amino-acid chain: MAEITVGQLAQQTNKEVDALLKQLKSFGIEKSSEKDTLTPAEMKTLLEKINSAKNTATRKKVTSVKLDGKHKINVSVKRKRRVAKKVEQQESTTLEQPQELETMVQEVSQQVDIVKGQDNIEQIVENKEAVKVQEQRQAEIAKPVIKDSGFKITAMPEIKIEEIVTEDDEGLSASDKQAKKKAAKKVFSEAVNTNTKYKREEEEKKSKAKKAGGKGFKKANPRQLSQLAGDLESFDEFGAKKGKLKAPKVKKQEFTKPVENTVRTVEIHEGITVSELAQKMAVKGAEIVKVLFNMGVMATINQSLDQDTAILIVEEMGHKYTLHNENALEEAVTTVDRSSYKKISRAPVVTIMGHVDHGKTSLLDYIRQTRVVAGEAGGITQHIGAYSVKTDKGSITFLDTPGHEAFTSMRARGAKSTDIVILVVAADDGVMPQTEEAIQHAKAARVPIVVAVNKIDKPEADPDKVISELAQRNVIPESWGGDVMFVNVSAKTGEGVADLLEAVLLQSEVLELEAFAEGLAEGVVIESRLEKGRGPVATVLVQNGNLKQGDNILCGTEYGRVRAMHNDLGKKIKAAGPATPVEILGLSGVPAAGDEMVVIENEKKAKELAAQRSQKQKEAKIAQEQSLKLSNMFNNMGKEGEQQVLKIILKGDVQGSVEAIRESLLKLSTDEVKVDIIASGIGAITSSDVTLAVASTAVVIGFNVRADSAAKKLAETDGVEFRYYNIIYDLIDDVKKAMSGLLSPEMKEQIIGIAEVREVYRSSKFGSIAGCMVIEGVVKRTNPIRVLRNNVVIYEGTLESLKRFKDDASEVKKGLECGIGVKNYNDVREGDQIEVFEVIEVAKEL.

Positions 198 to 219 (YKREEEEKKSKAKKAGGKGFKK) are disordered. Positions 207 to 219 (SKAKKAGGKGFKK) are enriched in basic residues. The 168-residue stretch at 345 to 512 (SRAPVVTIMG…AVLLQSEVLE (168 aa)) folds into the tr-type G domain. The segment at 354-361 (GHVDHGKT) is G1. Residue 354–361 (GHVDHGKT) coordinates GTP. A G2 region spans residues 379–383 (GITQH). Residues 400-403 (DTPG) are G3. GTP is bound by residues 400–404 (DTPGH) and 454–457 (NKID). The segment at 454–457 (NKID) is G4. The G5 stretch occupies residues 490–492 (SAK).

This sequence belongs to the TRAFAC class translation factor GTPase superfamily. Classic translation factor GTPase family. IF-2 subfamily.

It is found in the cytoplasm. One of the essential components for the initiation of protein synthesis. Protects formylmethionyl-tRNA from spontaneous hydrolysis and promotes its binding to the 30S ribosomal subunits. Also involved in the hydrolysis of GTP during the formation of the 70S ribosomal complex. This Francisella tularensis subsp. novicida (strain U112) protein is Translation initiation factor IF-2.